The chain runs to 368 residues: 4-hydroxy-3-methylbut-2-en-1-yl diphosphate synthase (flavodoxin) (368 aa).

[4Fe-4S] cluster contacts are provided by Cys271, Cys274, Cys306, and Glu313.

It belongs to the IspG family. [4Fe-4S] cluster is required as a cofactor.

The catalysed reaction is (2E)-4-hydroxy-3-methylbut-2-enyl diphosphate + oxidized [flavodoxin] + H2O + 2 H(+) = 2-C-methyl-D-erythritol 2,4-cyclic diphosphate + reduced [flavodoxin]. Its pathway is isoprenoid biosynthesis; isopentenyl diphosphate biosynthesis via DXP pathway; isopentenyl diphosphate from 1-deoxy-D-xylulose 5-phosphate: step 5/6. In terms of biological role, converts 2C-methyl-D-erythritol 2,4-cyclodiphosphate (ME-2,4cPP) into 1-hydroxy-2-methyl-2-(E)-butenyl 4-diphosphate. The protein is 4-hydroxy-3-methylbut-2-en-1-yl diphosphate synthase (flavodoxin) of Haemophilus influenzae (strain PittGG).